The sequence spans 20 residues: Bulb protein (20 aa).

Residues 1–20 form a disordered region; that stretch reads APDVHTRXTQNGLPPGXLPS.

This chain is Bulb protein, found in Narcissus pseudonarcissus (Daffodil).